A 75-amino-acid chain; its full sequence is Kappa-thalatoxin-Cad2a (75 aa).

The N-terminal stretch at 1 to 22 (MKFQMIAAVLLIAFCLCVVVTA) is a signal peptide. Positions 23 to 40 (RMELQDVEDMKNGSFQKR) are excised as a propeptide. Residues 43–75 (CIDTIPKSRCTAFQCKNSMKYRLSFCRKTCGTC) form the ShKT domain. 3 cysteine pairs are disulfide-bonded: Cys43–Cys75, Cys52–Cys68, and Cys57–Cys72.

It belongs to the sea anemone type 1 potassium channel toxin family. Type 1a subfamily.

The protein resides in the secreted. Its subcellular location is the nematocyst. Functionally, inhibits voltage-gated potassium channels (Kv) with higher potency for Kv1.1/KCNA1 and Kv1.3/KCNA3. In Cryptodendrum adhaesivum (Adhesive sea anemone), this protein is Kappa-thalatoxin-Cad2a.